The chain runs to 367 residues: 2-oxoisovalerate dehydrogenase subunit alpha (367 aa).

Substrate-binding positions include Phe66, Tyr95, Met128–His131, and Ser144. Tyr94–Arg96 is a thiamine diphosphate binding site. Thiamine diphosphate-binding positions include Ser144–Ile146, Gly174–Glu180, Asn204–Ile208, and His273. Residues Asp175, Asn204, and Tyr206 each coordinate Mg(2+).

This sequence belongs to the BCKDHA family. Heterotetramer of two alpha and two beta chains. Directly associated with ODBB in the E1 complex. It depends on thiamine diphosphate as a cofactor.

The enzyme catalyses N(6)-[(R)-lipoyl]-L-lysyl-[protein] + 3-methyl-2-oxobutanoate + H(+) = N(6)-[(R)-S(8)-2-methylpropanoyldihydrolipoyl]-L-lysyl-[protein] + CO2. Functionally, the branched-chain alpha-keto dehydrogenase complex catalyzes the overall conversion of alpha-keto acids to acyl-CoA and CO(2). It contains multiple copies of three enzymatic components: branched-chain alpha-keto acid decarboxylase (E1), lipoamide acyltransferase (E2) and lipoamide dehydrogenase (E3). The protein is 2-oxoisovalerate dehydrogenase subunit alpha of Thermus thermophilus (strain ATCC BAA-163 / DSM 7039 / HB27).